The primary structure comprises 863 residues: Paramyosin (863 aa).

A nonhelical region region spans residues 1–18 (MSESHVKISRTIIRGTSP). The stretch at 19–836 (STVRLESRVR…ERTITIKRTI (818 aa)) forms a coiled coil. The tract at residues 837 to 863 (GGPGSRAVSVVREINSVSRGNRATSIM) is nonhelical region.

The protein belongs to the paramyosin family. As to quaternary structure, homodimer.

Its subcellular location is the cytoplasm. The protein localises to the myofibril. In terms of biological role, paramyosin is a major structural component of many thick filaments isolated from invertebrate muscles. In Taenia saginata (Beef tapeworm), this protein is Paramyosin (PMY).